We begin with the raw amino-acid sequence, 159 residues long: Large ribosomal subunit protein uL15 (159 aa).

The interval 1–39 (MKLNELSPADGSTKKRMRVGRGVGSGKGKTAGRGVKGQN) is disordered. A compositionally biased stretch (gly residues) spans 21–35 (RGVGSGKGKTAGRGV).

Belongs to the universal ribosomal protein uL15 family. In terms of assembly, part of the 50S ribosomal subunit.

Binds to the 23S rRNA. The protein is Large ribosomal subunit protein uL15 of Hyphomonas neptunium (strain ATCC 15444).